Consider the following 925-residue polypeptide: Proto-oncogene DBL (925 aa).

The 88-residue stretch at 1-88 (MAEANPRRGK…ELGGTLQYCH (88 aa)) folds into the CRAL-TRIO domain. Residues 221 to 322 (WKFEQDFQQL…EIKAKRIQLS (102 aa)) form a Spectrin repeat. A DH domain is found at 495–675 (LKNHVLNELI…LDLLKSVNDS (181 aa)). Residues 687–809 (NLNELGKMIM…WLKEIRNILL (123 aa)) enclose the PH domain.

Belongs to the MCF2 family. In terms of assembly, interacts with an array of inositol phospholipids such as phosphatidylinositol 3-phosphate (PI3P), phosphatidylinositol 4-phosphate (PI4P) and phosphatidylinositol 5-phosphate (PI5P). May interact with CCPG1. Phosphorylation by TNK2 enhances guanine nucleotide exchange factor (GEF) activity toward Rho family proteins. Isoform 1 is expressed only in brain. Isoform 3 is expressed in heart, kidney, spleen, liver and testis. Isoform 4 is expressed in brain, heart, kidney, testis, placenta, stomach and peripheral blood. The protein is detectable in brain, heart, kidney, intestine, muscle, lung and testis.

Its subcellular location is the cytoplasm. The protein localises to the membrane. Its function is as follows. Guanine nucleotide exchange factor (GEF) that modulates the Rho family of GTPases. Promotes the conversion of some member of the Rho family GTPase from the GDP-bound to the GTP-bound form. Isoform 1 exhibits no activity toward RHOA, RAC1 or CDC42. Isoform 2 exhibits decreased GEF activity toward CDC42. Isoform 3 exhibits a weak but significant activity toward RAC1 and CDC42. Isoform 4 exhibits significant activity toward RHOA and CDC42. The truncated DBL oncogene is active toward RHOA, RAC1 and CDC42. This chain is Proto-oncogene DBL (MCF2), found in Homo sapiens (Human).